Consider the following 419-residue polypeptide: Murein hydrolase activator EnvC (419 aa).

The N-terminal stretch at 1–34 (MTRAVKPRRFAIRPIIYASVLSAGVLLCAFSAHA) is a signal peptide. Coiled coils occupy residues 35 to 124 (DERD…LDAA) and 155 to 271 (LNQA…ATRK). A compositionally biased stretch (basic and acidic residues) spans 252 to 270 (EREAREAQAVRDRQKEATR). The interval 252-290 (EREAREAQAVRDRQKEATRKGTTYKPTESEKSLMSRTGG) is disordered.

The protein belongs to the peptidase M23B family.

Its subcellular location is the periplasm. Functionally, activator of the cell wall hydrolases AmiA and AmiB. Required for septal murein cleavage and daughter cell separation during cell division. In vitro, exhibits weak endoproteolytic activity on beta-casein. The sequence is that of Murein hydrolase activator EnvC (envC) from Escherichia coli (strain K12).